Here is a 602-residue protein sequence, read N- to C-terminus: NADH-quinone oxidoreductase subunit C/D (602 aa).

An NADH dehydrogenase I subunit C region spans residues 1-192; the sequence is MVNNMTDLTA…DPFELTKAKQ (192 aa). Residues 216–602 are NADH dehydrogenase I subunit D; sequence DFMFLNLGPN…IDFVMSDVDR (387 aa).

It in the N-terminal section; belongs to the complex I 30 kDa subunit family. This sequence in the C-terminal section; belongs to the complex I 49 kDa subunit family. In terms of assembly, NDH-1 is composed of 13 different subunits. Subunits NuoB, CD, E, F, and G constitute the peripheral sector of the complex.

It localises to the cell inner membrane. It catalyses the reaction a quinone + NADH + 5 H(+)(in) = a quinol + NAD(+) + 4 H(+)(out). Its function is as follows. NDH-1 shuttles electrons from NADH, via FMN and iron-sulfur (Fe-S) centers, to quinones in the respiratory chain. The immediate electron acceptor for the enzyme in this species is believed to be ubiquinone. Couples the redox reaction to proton translocation (for every two electrons transferred, four hydrogen ions are translocated across the cytoplasmic membrane), and thus conserves the redox energy in a proton gradient. The protein is NADH-quinone oxidoreductase subunit C/D of Klebsiella pneumoniae (strain 342).